The sequence spans 433 residues: sn-glycerol-3-phosphate-binding periplasmic protein UgpB (433 aa).

A signal peptide spans 1–25 (MFTRLITTSALTGAIALTIGSQAFA). Sn-glycerol 3-phosphate is bound by residues Tyr-67, Asp-91, Ser-146, Ser-273, Gly-307, Tyr-346, and Arg-397.

This sequence belongs to the bacterial solute-binding protein 1 family. In terms of assembly, the complex is composed of two ATP-binding proteins (UgpC), two transmembrane proteins (UgpA and UgpE) and a solute-binding protein (UgpB).

The protein resides in the periplasm. Its function is as follows. Part of the ABC transporter complex UgpBAEC involved in sn-glycerol-3-phosphate (G3P) import. Binds G3P. The protein is sn-glycerol-3-phosphate-binding periplasmic protein UgpB (ugpB) of Brucella suis biovar 1 (strain 1330).